Reading from the N-terminus, the 352-residue chain is Ribosomal lysine N-methyltransferase 5 (352 aa).

Residues tryptophan 107, glycine 161–glycine 163, aspartate 183, tryptophan 244, and leucine 274 each bind S-adenosyl-L-methionine.

This sequence belongs to the class I-like SAM-binding methyltransferase superfamily. RKM5 family.

Its function is as follows. S-adenosyl-L-methionine-dependent protein-lysine N-methyltransferase that methylates 60S ribosomal protein L1. This chain is Ribosomal lysine N-methyltransferase 5 (RKM5), found in Candida glabrata (strain ATCC 2001 / BCRC 20586 / JCM 3761 / NBRC 0622 / NRRL Y-65 / CBS 138) (Yeast).